A 200-amino-acid polypeptide reads, in one-letter code: Potassium-transporting ATPase KdpC subunit (200 aa).

Residues 9-31 traverse the membrane as a helical segment; the sequence is LVMLVALTALTGLVYPLAMTGVA. Residues 68–97 are disordered; that stretch reads GRPSATTAPDPQDSSKTVPSPYNAANSMGA. Positions 71–96 are enriched in polar residues; sequence SATTAPDPQDSSKTVPSPYNAANSMG.

The protein belongs to the KdpC family. In terms of assembly, the system is composed of three essential subunits: KdpA, KdpB and KdpC.

The protein localises to the cell inner membrane. Functionally, part of the high-affinity ATP-driven potassium transport (or Kdp) system, which catalyzes the hydrolysis of ATP coupled with the electrogenic transport of potassium into the cytoplasm. This subunit acts as a catalytic chaperone that increases the ATP-binding affinity of the ATP-hydrolyzing subunit KdpB by the formation of a transient KdpB/KdpC/ATP ternary complex. This is Potassium-transporting ATPase KdpC subunit from Rhodopseudomonas palustris (strain BisA53).